A 262-amino-acid chain; its full sequence is Leucine-rich repeat-containing protein 18 (262 aa).

7 LRR repeats span residues 28–49 (GRKR…ILRL), 51–72 (DIDE…IAKF), 74–95 (NLRW…IGQM), 97–118 (SLLF…VELN), 122–144 (NIRT…GALK), 145–167 (ELHE…AKLP), and 168–189 (KLKK…EMFV).

As to expression, exclusively expressed in spermatocytes and roud spermatids within seminiferous tubules during spermatogenesis.

Its subcellular location is the cytoplasm. In terms of biological role, may be involved in the regulation of spermatogenesis and sperm maturation. The protein is Leucine-rich repeat-containing protein 18 (Lrrc18) of Mus musculus (Mouse).